Reading from the N-terminus, the 208-residue chain is High frequency lysogenization protein HflD homolog (208 aa).

Belongs to the HflD family.

The protein localises to the cytoplasm. Its subcellular location is the cell inner membrane. The sequence is that of High frequency lysogenization protein HflD homolog from Pseudomonas entomophila (strain L48).